A 210-amino-acid chain; its full sequence is Orotate phosphoribosyltransferase (210 aa).

5-phospho-alpha-D-ribose 1-diphosphate contacts are provided by residues Arg94, Lys98, His100, and 120–128 (EDLISTGGS). Residue Ser124 coordinates orotate.

This sequence belongs to the purine/pyrimidine phosphoribosyltransferase family. PyrE subfamily. Homodimer. It depends on Mg(2+) as a cofactor.

The enzyme catalyses orotidine 5'-phosphate + diphosphate = orotate + 5-phospho-alpha-D-ribose 1-diphosphate. The protein operates within pyrimidine metabolism; UMP biosynthesis via de novo pathway; UMP from orotate: step 1/2. In terms of biological role, catalyzes the transfer of a ribosyl phosphate group from 5-phosphoribose 1-diphosphate to orotate, leading to the formation of orotidine monophosphate (OMP). In Halalkalibacterium halodurans (strain ATCC BAA-125 / DSM 18197 / FERM 7344 / JCM 9153 / C-125) (Bacillus halodurans), this protein is Orotate phosphoribosyltransferase.